Reading from the N-terminus, the 263-residue chain is Indole-3-glycerol phosphate synthase (263 aa).

The protein belongs to the TrpC family.

The catalysed reaction is 1-(2-carboxyphenylamino)-1-deoxy-D-ribulose 5-phosphate + H(+) = (1S,2R)-1-C-(indol-3-yl)glycerol 3-phosphate + CO2 + H2O. Its pathway is amino-acid biosynthesis; L-tryptophan biosynthesis; L-tryptophan from chorismate: step 4/5. In Rhodospirillum rubrum (strain ATCC 11170 / ATH 1.1.1 / DSM 467 / LMG 4362 / NCIMB 8255 / S1), this protein is Indole-3-glycerol phosphate synthase.